Here is a 136-residue protein sequence, read N- to C-terminus: Calcitonin (136 aa).

The first 25 residues, 1-25 (MGFLKFSPFLVVSILLLYQACGLQA), serve as a signal peptide directing secretion. Positions 26 to 82 (VPLRSTLESSPGMATLSEEEARLLAALVQNYMQMKVRELEQEEEQEAEGSSLDSPRS) are excised as a propeptide. Ser42 is modified (phosphoserine). The disordered stretch occupies residues 64-84 (LEQEEEQEAEGSSLDSPRSKR). Cys85 and Cys91 are disulfide-bonded. The N-linked (GlcNAc...) asparagine glycan is linked to Asn87. Residues 114 to 136 (GAPGKKRDMAKDLETNHHPYFGN) form a disordered region. Pro116 carries the post-translational modification Proline amide. The segment covering 118-130 (KKRDMAKDLETNH) has biased composition (basic and acidic residues). Positions 121 to 136 (DMAKDLETNHHPYFGN) are excised as a propeptide.

The protein belongs to the calcitonin family.

It is found in the secreted. In terms of biological role, calcitonin is a peptide hormone that causes a rapid but short-lived drop in the level of calcium and phosphate in blood by promoting the incorporation of those ions in the bones. Calcitonin function is mediated by the calcitonin receptor/CALCR and the CALCR-RAMP2 (AMYR2) receptor complex. The sequence is that of Calcitonin from Rattus norvegicus (Rat).